Reading from the N-terminus, the 498-residue chain is MTEKIRVRYAPSPTGHLHIGNARTAIFNWLFARHYNGQFIIRIEDTDLARNVKDGEKSQLDNLQWLGIDWDEGPDKANSKYAPYRQTERAAQGVYQKYIDELLASGKAYKSYKTEATLKEEREAQAQAHQAPHYVYEYAGMTKEQIKDAQAKDEAAGLKSVVRFRVPENHDYQWQDLVKGEVKINSKEIGGDWVIQKADGMPTYNFAVVIDDHLMEITHVLRGDDHVSNTPKQLMVYEAFGWKAPAFGHMALIIKAETGKKLSKRDEDTLQFIEQYRELGYLPEAMFNFIGLLGWSPVGENEIFTREQFKEMFDENRFTKANAKFDAKKLAWVNNQWMRSEKEKVMPQLIHELVKAGLINDQQAKNDADHLAKIIEIAGVDGIKATSEIAPLAEYPFFKLHDISKEDRQSWLETDDGQKVAAAFTEKIKALAEDEFKAGHILQIIRDLQHDLQIKGRPLWNPIRLITTHEVQGPNLPEILAVMGKDWTIKNIQLTVAV.

The 'HIGH' region signature appears at 11 to 21 (PSPTGHLHIGN). The 'KMSKS' region signature appears at 261–265 (KLSKR). ATP is bound at residue lysine 264.

This sequence belongs to the class-I aminoacyl-tRNA synthetase family. Glutamate--tRNA ligase type 1 subfamily. As to quaternary structure, monomer.

Its subcellular location is the cytoplasm. It carries out the reaction tRNA(Glu) + L-glutamate + ATP = L-glutamyl-tRNA(Glu) + AMP + diphosphate. Functionally, catalyzes the attachment of glutamate to tRNA(Glu) in a two-step reaction: glutamate is first activated by ATP to form Glu-AMP and then transferred to the acceptor end of tRNA(Glu). The polypeptide is Glutamate--tRNA ligase (Oenococcus oeni (strain ATCC BAA-331 / PSU-1)).